Here is a 212-residue protein sequence, read N- to C-terminus: uncharacterized protein (212 aa).

This is an uncharacterized protein from Aquifex aeolicus (strain VF5).